We begin with the raw amino-acid sequence, 450 residues long: Succinate-semialdehyde dehydrogenase (450 aa).

Residue 119 to 120 (WN) participates in NADP(+) binding. Residue arginine 128 participates in substrate binding. NADP(+)-binding positions include 143–146 (KPAK) and 197–198 (GS). The active-site Proton acceptor is the glutamate 219. Residue leucine 220 participates in NADP(+) binding. 2 residues coordinate substrate: arginine 247 and cysteine 253. Cysteine 253 serves as the catalytic Nucleophile. Residue glutamate 350 coordinates NADP(+). Serine 410 serves as a coordination point for substrate.

Belongs to the aldehyde dehydrogenase family. As to quaternary structure, homodimer.

The enzyme catalyses succinate semialdehyde + NAD(+) + H2O = succinate + NADH + 2 H(+). It carries out the reaction succinate semialdehyde + NADP(+) + H2O = succinate + NADPH + 2 H(+). The protein operates within alkaloid degradation; nicotine degradation. Its function is as follows. Catalyzes the NAD(P)(+)-dependent oxidation of succinate semialdehyde to succinate, which may enter the citric acid cycle. Is involved in the catabolism of 4-methylaminobutanoate produced from nicotine. Acts preferentially with NADP(+) as cosubstrate but can also use NAD(+). To a lesser extent, is active also towards butyraldehyde (8.5% of the activity observed with succinate semialdehyde) and propionaldehyde (1.6% of the activity observed with succinate semialdehyde) as substrates. The sequence is that of Succinate-semialdehyde dehydrogenase (sad) from Paenarthrobacter nicotinovorans (Arthrobacter nicotinovorans).